A 233-amino-acid chain; its full sequence is Bcl-2-like protein 1 (233 aa).

Positions Ser-4–Trp-24 match the BH4 motif. The disordered stretch occupies residues Ser-28–His-71. A Phosphoserine; by PLK3 modification is found at Ser-49. Ser-62 bears the Phosphoserine; by CDK1 mark. The BH3 motif lies at Val-86–Arg-100. Residues Glu-129 to Gly-148 carry the BH1 motif. A BH2 motif is present at residues Pro-180–Tyr-195. Residues Phe-210–Leu-226 traverse the membrane as a helical segment.

Belongs to the Bcl-2 family. In terms of assembly, homodimer. Interacts with BCL2L11. Interacts with BAD. Interacts with PGAM5. Interacts with HEBP2. Interacts with p53/TP53 and BBC3; interaction with BBC3 disrupts the interaction with p53/TP53. Interacts with ATP5F1A and ATP5F1B; the interactions mediate the association of isoform Bcl-X(L) with the mitochondrial membrane ATP synthase F(1)F(0) ATP synthase. Interacts with VDAC1. Interacts with BCL2L11 (via BH3). Interacts with RNF183. Interacts with GIMAP3/IAN4 and GIMAP5/IAN5. Interacts with GIMAP5 and HSPA8/HSC70; the interaction between HSPA8 and BCL2L1 is impaired in the absence of GIMAP5. Interacts with isoform 4 of CLU; this interaction releases and activates BAX and promotes cell death. As to quaternary structure, forms heterodimers with BAX, BAK or BCL2; heterodimerization with BAX does not seem to be required for anti-apoptotic activity. Interacts with isoform 1 of SIVA1; the interaction inhibits the anti-apoptotic activity. Interacts with IKZF3. Interacts with RTL10/BOP. Interacts with DNM1L and CLTA; DNM1L and BCL2L1 isoform BCL-X(L) may form a complex in synaptic vesicles that also contains clathrin and MFF. Interacts (via the loop between motifs BH4 and BH3) with NLRP1 (via LRR repeats), but not with NLRP2, NLRP3, NLRP4, PYCARD, nor MEFV. Interacts with BECN1. Post-translationally, proteolytically cleaved by caspases during apoptosis. The cleaved protein, lacking the BH4 motif, has pro-apoptotic activity. In terms of processing, phosphorylated on Ser-62 by CDK1. This phosphorylation is partial in normal mitotic cells, but complete in G2-arrested cells upon DNA-damage, thus promoting subsequent apoptosis probably by triggering caspases-mediated proteolysis. Phosphorylated by PLK3, leading to regulate the G2 checkpoint and progression to cytokinesis during mitosis. Phosphorylation at Ser-49 appears during the S phase and G2, disappears rapidly in early mitosis during prometaphase, metaphase and early anaphase, and re-appears during telophase and cytokinesis. Ubiquitinated by RNF183 during prolonged ER stress, leading to degradation by the proteosome. As to expression, bcl-X(S) is expressed at high levels in cells that undergo a high rate of turnover, such as developing lymphocytes. In contrast, Bcl-X(L) is found in tissues containing long-lived postmitotic cells, such as adult brain.

Its subcellular location is the mitochondrion inner membrane. It localises to the mitochondrion outer membrane. The protein resides in the mitochondrion matrix. It is found in the cytoplasmic vesicle. The protein localises to the secretory vesicle. Its subcellular location is the synaptic vesicle membrane. It localises to the cytoplasm. The protein resides in the cytosol. It is found in the cytoskeleton. The protein localises to the microtubule organizing center. Its subcellular location is the centrosome. It localises to the nucleus membrane. Its function is as follows. Potent inhibitor of cell death. Inhibits activation of caspases. Appears to regulate cell death by blocking the voltage-dependent anion channel (VDAC) by binding to it and preventing the release of the caspase activator, CYC1, from the mitochondrial membrane. Also acts as a regulator of G2 checkpoint and progression to cytokinesis during mitosis. Functionally, isoform Bcl-X(L) also regulates presynaptic plasticity, including neurotransmitter release and recovery, number of axonal mitochondria as well as size and number of synaptic vesicle clusters. During synaptic stimulation, increases ATP availability from mitochondria through regulation of mitochondrial membrane ATP synthase F(1)F(0) activity and regulates endocytic vesicle retrieval in hippocampal neurons through association with DMN1L and stimulation of its GTPase activity in synaptic vesicles. May attenuate inflammation impairing NLRP1-inflammasome activation, hence CASP1 activation and IL1B release. In terms of biological role, isoform Bcl-X(S) promotes apoptosis. The protein is Bcl-2-like protein 1 (BCL2L1) of Homo sapiens (Human).